A 177-amino-acid polypeptide reads, in one-letter code: MSRFQRLTKYVAIGGGAALLLAGAAYLAGAKVNTTKSIPVGLYWKSNAPVEKGAYVMFCPPQVGVFSDAKERGYIAGGFCPGDYGYMMKRVLAAKGDEVAITDAGVRVNGGLLPHSALIKADPSGRPLPRYQSDSYTLGTAEVLLMSDVSDTSFDGRYFGPVNRSQIITVIRPVLTW.

A signal peptide spans 1 to 30; the sequence is MSRFQRLTKYVAIGGGAALLLAGAAYLAGA.

It belongs to the peptidase S26C family.

The protein localises to the periplasm. Its function is as follows. Required for donor-specific phage sensitivity. May be involved in pilus assembly. The polypeptide is Plasmid transfer protein TraF (traF) (Escherichia coli).